We begin with the raw amino-acid sequence, 858 residues long: Leucine--tRNA ligase (858 aa).

The 'HIGH' region signature appears at 43-54 (PYPSGDGLHVGH). Positions 629–633 (KMSKS) match the 'KMSKS' region motif. K632 lines the ATP pocket.

This sequence belongs to the class-I aminoacyl-tRNA synthetase family.

The protein resides in the cytoplasm. The catalysed reaction is tRNA(Leu) + L-leucine + ATP = L-leucyl-tRNA(Leu) + AMP + diphosphate. In Treponema denticola (strain ATCC 35405 / DSM 14222 / CIP 103919 / JCM 8153 / KCTC 15104), this protein is Leucine--tRNA ligase.